A 172-amino-acid polypeptide reads, in one-letter code: Small ribosomal subunit protein uS5 (172 aa).

The S5 DRBM domain maps to 15–78 (LNDKLIFINR…ANAKRNLSRI (64 aa)).

This sequence belongs to the universal ribosomal protein uS5 family. Part of the 30S ribosomal subunit. Contacts proteins S4 and S8.

Its function is as follows. With S4 and S12 plays an important role in translational accuracy. In terms of biological role, located at the back of the 30S subunit body where it stabilizes the conformation of the head with respect to the body. This is Small ribosomal subunit protein uS5 from Dehalococcoides mccartyi (strain ATCC BAA-2266 / KCTC 15142 / 195) (Dehalococcoides ethenogenes (strain 195)).